The sequence spans 1047 residues: Formin-like protein 3 (1047 aa).

The N-myristoyl glycine moiety is linked to residue Gly2. The region spanning 22–462 (VPMPDPTELE…AAFQRHNNIE (441 aa)) is the GBD/FH3 domain. The segment at 520-561 (AVPVEAVAPPPPPPPPPPPPPPAPPLPSEVESIPIPPPPPPP) is disordered. The span at 527–546 (APPPPPPPPPPPPPPAPPLP) shows a compositional bias: pro residues. The region spanning 580–970 (IKKPIKTKFR…MREKLLAQEA (391 aa)) is the FH2 domain. A DAD domain is found at 1000 to 1037 (DHRPVYEGKDGTIEDIITVLKSVPFTARTAKRGSRFFC).

The protein belongs to the formin homology family.

It localises to the cytoplasm. The protein localises to the cell membrane. In terms of biological role, required for developmental angiogenesis, but not for vasculogenesis. This Danio rerio (Zebrafish) protein is Formin-like protein 3 (fmnl3).